We begin with the raw amino-acid sequence, 499 residues long: Na(+)/H(+) antiporter NhaB (499 aa).

12 consecutive transmembrane segments (helical) span residues 38 to 58 (VSPF…LAMA), 62 to 82 (YPLQ…LTSA), 89 to 109 (VLAN…IYFM), 128 to 148 (LLLS…LDAL), 149 to 169 (TVTA…HRFA), 204 to 224 (LIMH…VGEP), 242 to 262 (LVMA…CAIL), 310 to 330 (VLVF…LLII), 349 to 369 (FEEA…VAVI), 393 to 413 (MFFV…VATV), 449 to 469 (ATPN…APLI), and 478 to 498 (IMAL…VILF).

The protein belongs to the NhaB Na(+)/H(+) (TC 2.A.34) antiporter family.

The protein resides in the cell inner membrane. The enzyme catalyses 2 Na(+)(in) + 3 H(+)(out) = 2 Na(+)(out) + 3 H(+)(in). Functionally, na(+)/H(+) antiporter that extrudes sodium in exchange for external protons. The chain is Na(+)/H(+) antiporter NhaB from Saccharophagus degradans (strain 2-40 / ATCC 43961 / DSM 17024).